Here is a 219-residue protein sequence, read N- to C-terminus: Ribosomal RNA large subunit methyltransferase E (219 aa).

Residues Gly-60, Trp-62, Asp-85, Asp-101, and Asp-126 each contribute to the S-adenosyl-L-methionine site. The Proton acceptor role is filled by Lys-166.

It belongs to the class I-like SAM-binding methyltransferase superfamily. RNA methyltransferase RlmE family.

Its subcellular location is the cytoplasm. The catalysed reaction is uridine(2552) in 23S rRNA + S-adenosyl-L-methionine = 2'-O-methyluridine(2552) in 23S rRNA + S-adenosyl-L-homocysteine + H(+). Specifically methylates the uridine in position 2552 of 23S rRNA at the 2'-O position of the ribose in the fully assembled 50S ribosomal subunit. The protein is Ribosomal RNA large subunit methyltransferase E of Bordetella avium (strain 197N).